We begin with the raw amino-acid sequence, 642 residues long: Chaperone protein DnaK (642 aa).

Thr-198 bears the Phosphothreonine; by autocatalysis mark. Residues 602 to 642 (AYAKMTEKQQSDDGAGTQNADHKEDDVVDADFEEVKSDKKD) are disordered.

Belongs to the heat shock protein 70 family.

Functionally, acts as a chaperone. This is Chaperone protein DnaK from Dichelobacter nodosus (strain VCS1703A).